A 905-amino-acid chain; its full sequence is V-type proton ATPase 116 kDa subunit a 1 (905 aa).

The Cytoplasmic segment spans residues 1–424 (MGDYVTPGEE…DAYGIATYRE (424 aa)). A helical transmembrane segment spans residues 425–443 (INPAPYTMISFPFLFAVMF). Residues 444–445 (GD) lie on the Lumenal side of the membrane. Residues 446 to 462 (MGHGAIMLLAALFFILK) form a helical membrane-spanning segment. Over 463 to 477 (EKQLEAARIKDEIFQ) the chain is Cytoplasmic. The helical transmembrane segment at 478–507 (TFFGGRYVIFLMGAFSIYTGFMYNDVFSKS) threads the bilayer. The Lumenal portion of the chain corresponds to 508-572 (INTFGSSWQN…EGNKLSFLNS (65 aa)). The chain crosses the membrane as a helical span at residues 573–592 (MKMKMSVLFGIAQMTFGVLL). At 593-610 (SYQNFIYFKSDLDIKYMF) the chain is on the cytoplasmic side. Residues 611–631 (IPQMIFLSSIFIYLCIQILSK) traverse the membrane as a helical segment. The Lumenal segment spans residues 632–699 (WLFFGAVGGT…YPGQATIEII (68 aa)). A helical transmembrane segment spans residues 700-719 (LVVLALVQVPIMLFAKPYFL). Residues 720–788 (YRRDKQQSRY…DVMVYQAIHT (69 aa)) are Cytoplasmic-facing. The helical transmembrane segment at 789 to 813 (IEFVLGCVSHTASYLRLWALSLAHA) threads the bilayer. Residues 814–834 (QLSDVLWTMVFRNAFVLDGYT) lie on the Lumenal side of the membrane. The helical transmembrane segment at 835 to 873 (GAIATYILFFIFGSLSVFILVLMEGLSAFLHALRLHWVE) threads the bilayer. Topologically, residues 874–905 (FQSKFYGGLGYEFAPFSFEKILAEEREAEENL) are cytoplasmic.

Belongs to the V-ATPase 116 kDa subunit family. In terms of assembly, V-ATPase is a heteromultimeric enzyme made up of two complexes: the ATP-hydrolytic V1 complex and the proton translocation V0 complex. The V1 complex consists of three catalytic AB heterodimers that form a heterohexamer, three peripheral stalks each consisting of EG heterodimers, one central rotor including subunits D and F, and the regulatory subunits C and H. The proton translocation complex V0 consists of the proton transport subunit a, a ring of proteolipid subunits c9c'', rotary subunit d, subunits e and f, and the accessory subunits vah-19/Ac45 and vah-20/PRR. Interacts with V-type proton ATPase subunit C vha-11. As to expression, ubiquitous expression in embryos. Expressed in gonads, intestine, neurons in the head and motoneurons in the ventral cord of larvae and adults. Expressed in the vulvae and spermathecal uterine valves. Weakly expressed in the pharynx. In terms of tissue distribution, specifically expressed in the nervous system.

It localises to the membrane. Its function is as follows. Subunit of the V0 complex of vacuolar(H+)-ATPase (V-ATPase), a multisubunit enzyme composed of a peripheral complex (V1) that hydrolyzes ATP and a membrane integral complex (V0) that translocates protons. V-ATPase is responsible for acidifying and maintaining the pH of intracellular compartments and in some cell types, is targeted to the plasma membrane, where it is responsible for acidifying the extracellular environment. Required for assembly and activity of the vacuolar ATPase. Regulates the size of gut granules during embryonic development. In neurons, required for necrotic cell death by promoting intracellular acidification. Required for cell death induced by hypoxia. Required for acidification of synaptic vesicles and the release of neurotransmitters from adult neurons. The polypeptide is V-type proton ATPase 116 kDa subunit a 1 (Caenorhabditis elegans).